Consider the following 499-residue polypeptide: Glutamyl-tRNA(Gln) amidotransferase subunit A (499 aa).

Active-site charge relay system residues include Lys76 and Ser151. Ser175 functions as the Acyl-ester intermediate in the catalytic mechanism.

The protein belongs to the amidase family. GatA subfamily. As to quaternary structure, heterotrimer of A, B and C subunits.

It catalyses the reaction L-glutamyl-tRNA(Gln) + L-glutamine + ATP + H2O = L-glutaminyl-tRNA(Gln) + L-glutamate + ADP + phosphate + H(+). Its function is as follows. Allows the formation of correctly charged Gln-tRNA(Gln) through the transamidation of misacylated Glu-tRNA(Gln) in organisms which lack glutaminyl-tRNA synthetase. The reaction takes place in the presence of glutamine and ATP through an activated gamma-phospho-Glu-tRNA(Gln). The polypeptide is Glutamyl-tRNA(Gln) amidotransferase subunit A (Rhodopirellula baltica (strain DSM 10527 / NCIMB 13988 / SH1)).